The chain runs to 374 residues: Coiled-coil domain-containing protein 89 (374 aa).

Positions 1–40 are disordered; the sequence is MRAPMLQKQQAPRMDTPPPEERLEKQNEKLNNQEEETEFK. Position 16 is a phosphothreonine (threonine 16). A compositionally biased stretch (basic and acidic residues) spans 19–32; it reads PEERLEKQNEKLNN. Positions 20 to 351 form a coiled coil; sequence EERLEKQNEK…DELRLQSEAF (332 aa).

This sequence belongs to the CCDC89 family. Interacts with HEY1.

Its subcellular location is the cytoplasm. It localises to the nucleus. The sequence is that of Coiled-coil domain-containing protein 89 (CCDC89) from Homo sapiens (Human).